Consider the following 281-residue polypeptide: INSIG family protein (281 aa).

At 1 to 93 (MSRKEIYEPR…FIDYSSLITF (93 aa)) the chain is on the cytoplasmic side. Serine 28 is modified (phosphoserine). The helical transmembrane segment at 94-120 (FCKLCVIFGLGFVFTYLAEQIVQDAKL) threads the bilayer. At 121 to 134 (PLLTVNLKSWKFEP) the chain is on the lumenal side. Residues 135 to 159 (PWPAIFGFVAVILGLSYRRMDTKYP) form a helical membrane-spanning segment. Residues 160-170 (LGAAPLRPSQS) lie on the Cytoplasmic side of the membrane. The helical transmembrane segment at 171 to 186 (SKWQWISRYLAAFATL) threads the bilayer. Topologically, residues 187 to 189 (LLS) are lumenal. A helical transmembrane segment spans residues 190 to 215 (MKKLLFISNSHSIVALVASSASIWYI). At 216–221 (FDRSRN) the chain is on the cytoplasmic side. Residues 222-256 (GIILSTITSVLGSILYYNLVDTSKIELNGVEFPEI) form a helical membrane-spanning segment. At 257–260 (QFRL) the chain is on the lumenal side. A helical transmembrane segment spans residues 261–281 (WIPMILFSASTIVGNAGRLLF).

Belongs to the INSIG family.

The protein resides in the endoplasmic reticulum membrane. The polypeptide is INSIG family protein (ins1) (Schizosaccharomyces pombe (strain 972 / ATCC 24843) (Fission yeast)).